A 163-amino-acid chain; its full sequence is Nucleotide-binding protein CYA_0935 (163 aa).

It belongs to the YajQ family.

Its function is as follows. Nucleotide-binding protein. This chain is Nucleotide-binding protein CYA_0935, found in Synechococcus sp. (strain JA-3-3Ab) (Cyanobacteria bacterium Yellowstone A-Prime).